Reading from the N-terminus, the 148-residue chain is UPF0179 protein Mevan_0979 (148 aa).

The protein belongs to the UPF0179 family.

This Methanococcus vannielii (strain ATCC 35089 / DSM 1224 / JCM 13029 / OCM 148 / SB) protein is UPF0179 protein Mevan_0979.